The chain runs to 497 residues: Serine/threonine protein phosphatase 2A 57 kDa regulatory subunit B' epsilon isoform (497 aa).

The tract at residues 12-71 (KFNKSDQHHQDNNNNNNNTSTNTVVRGSRTTTPAPSSVSNGESQTTAQSPSQTPNHPMFT) is disordered. The segment covering 23–34 (NNNNNNNTSTNT) has biased composition (low complexity). Residues 35–71 (VVRGSRTTTPAPSSVSNGESQTTAQSPSQTPNHPMFT) show a composition bias toward polar residues.

It belongs to the phosphatase 2A regulatory subunit B56 family. PP2A consists of a common heteromeric enzyme, composed of a catalytic subunit (subunits C), a constant regulatory subunit (subunit A), and a variety of regulatory subunits such as subunits B (the R2/B/PR55/B55, R3/B''/PR72/PR130/PR59 and R5/B'/B56 families). Expressed ubiquitously.

It is found in the cytoplasm. Functionally, the B regulatory subunit may modulate substrate selectivity and catalytic activity, and may also direct the localization of the catalytic enzyme to a particular subcellular compartment. The chain is Serine/threonine protein phosphatase 2A 57 kDa regulatory subunit B' epsilon isoform (B'EPSILON) from Arabidopsis thaliana (Mouse-ear cress).